A 391-amino-acid polypeptide reads, in one-letter code: Protein CAJ1 (391 aa).

The J domain maps to Glu-4–Glu-73. The segment at Lys-119–Gln-161 is disordered. Positions Glu-129–Gln-161 are enriched in basic and acidic residues. A Glycyl lysine isopeptide (Lys-Gly) (interchain with G-Cter in ubiquitin) cross-link involves residue Lys-132.

This is Protein CAJ1 (CAJ1) from Saccharomyces cerevisiae (strain ATCC 204508 / S288c) (Baker's yeast).